Consider the following 487-residue polypeptide: Serine/threonine-protein kinase 4 (487 aa).

Residue Met-1 is modified to N-acetylmethionine. The residue at position 3 (Thr-3) is a Phosphothreonine. The 252-residue stretch at Phe-30 to Val-281 folds into the Protein kinase domain. ATP is bound by residues Leu-36–Val-44 and Lys-59. Asp-149 (proton acceptor) is an active-site residue. Position 183 is a phosphothreonine; by autocatalysis (Thr-183). Ser-265 carries the post-translational modification Phosphoserine. The stretch at Leu-290 to Arg-310 forms a coiled coil. Positions Gln-305–Met-338 are disordered. Residues Asp-313 to Asp-326 show a composition bias toward acidic residues. At Ser-320 the chain carries Phosphoserine. Thr-340 and Thr-367 each carry phosphothreonine. Thr-387 carries the post-translational modification Phosphothreonine; by PKB/AKT1. A phosphoserine mark is found at Ser-410 and Ser-414. Residue Tyr-433 is modified to Phosphotyrosine. Residues Tyr-433–Lys-480 form the SARAH domain.

This sequence belongs to the protein kinase superfamily. STE Ser/Thr protein kinase family. STE20 subfamily. In terms of assembly, homodimer; mediated via the coiled-coil region. Interacts with NORE1, which inhibits autoactivation. Interacts with and stabilizes SAV1. Interacts with RASSF1. Interacts with FOXO3. Interacts with RASSF2 (via SARAH domain). Interacts with AR, PKB/AKT1, TNNI3 and SIRT1. Interacts with DLG5 (via PDZ domain 3). Interacts with MARK3 and SCRIB in the presence of DLG5. It depends on Mg(2+) as a cofactor. In terms of processing, autophosphorylated on serine and threonine residues. Phosphorylation at Thr-387 by PKB/AKT1, leads to inhibition of its: kinase activity, nuclear translocation and autophosphorylation at Thr-183. It also diminishes its cleavage by caspases and its ability to phosphorylate FOXO3. Proteolytically cleaved by caspase-3 during apoptosis at Asp-326 and Asp-349 resulting in a 37 kDa or a 39 kDa subunit respectively. The 39 kDa subunit is further cleaved into the 37 kDa form. Proteolytic cleavage results in kinase activation and nuclear translocation of the truncated form (MST1/N). It is less likely that cleavage at Asp-349 is a prerequisite for activation as this site is not conserved in the murine ortholog.

Its subcellular location is the cytoplasm. The protein resides in the nucleus. It carries out the reaction L-seryl-[protein] + ATP = O-phospho-L-seryl-[protein] + ADP + H(+). The catalysed reaction is L-threonyl-[protein] + ATP = O-phospho-L-threonyl-[protein] + ADP + H(+). Inhibited by the C-terminal non-catalytic region. Activated by caspase-cleavage. Full activation also requires homodimerization and autophosphorylation of Thr-183. Activated by RASSF1 which acts by preventing its dephosphorylation. In terms of biological role, stress-activated, pro-apoptotic kinase which, following caspase-cleavage, enters the nucleus and induces chromatin condensation followed by internucleosomal DNA fragmentation. Key component of the Hippo signaling pathway which plays a pivotal role in organ size control and tumor suppression by restricting proliferation and promoting apoptosis. The core of this pathway is composed of a kinase cascade wherein STK3/MST2 and STK4/MST1, in complex with its regulatory protein SAV1, phosphorylates and activates LATS1/2 in complex with its regulatory protein MOB1, which in turn phosphorylates and inactivates YAP1 oncoprotein and WWTR1/TAZ. Phosphorylation of YAP1 by LATS2 inhibits its translocation into the nucleus to regulate cellular genes important for cell proliferation, cell death, and cell migration. STK3/MST2 and STK4/MST1 are required to repress proliferation of mature hepatocytes, to prevent activation of facultative adult liver stem cells (oval cells), and to inhibit tumor formation. Phosphorylates 'Ser-14' of histone H2B (H2BS14ph) during apoptosis. Phosphorylates FOXO3 upon oxidative stress, which results in its nuclear translocation and cell death initiation. Phosphorylates MOBKL1A, MOBKL1B and RASSF2. Phosphorylates TNNI3 (cardiac Tn-I) and alters its binding affinity to TNNC1 (cardiac Tn-C) and TNNT2 (cardiac Tn-T). Phosphorylates FOXO1 on 'Ser-212' and regulates its activation and stimulates transcription of PMAIP1 in a FOXO1-dependent manner. Phosphorylates SIRT1 and inhibits SIRT1-mediated p53/TP53 deacetylation, thereby promoting p53/TP53 dependent transcription and apoptosis upon DNA damage. Acts as an inhibitor of PKB/AKT1. Phosphorylates AR on 'Ser-650' and suppresses its activity by intersecting with PKB/AKT1 signaling and antagonizing formation of AR-chromatin complexes. This is Serine/threonine-protein kinase 4 (STK4) from Lemur catta (Ring-tailed lemur).